The following is a 364-amino-acid chain: Aminomethyltransferase (364 aa).

It belongs to the GcvT family. In terms of assembly, the glycine cleavage system is composed of four proteins: P, T, L and H.

It carries out the reaction N(6)-[(R)-S(8)-aminomethyldihydrolipoyl]-L-lysyl-[protein] + (6S)-5,6,7,8-tetrahydrofolate = N(6)-[(R)-dihydrolipoyl]-L-lysyl-[protein] + (6R)-5,10-methylene-5,6,7,8-tetrahydrofolate + NH4(+). Its function is as follows. The glycine cleavage system catalyzes the degradation of glycine. The protein is Aminomethyltransferase of Staphylococcus carnosus (strain TM300).